The following is a 585-amino-acid chain: Parathyroid hormone/parathyroid hormone-related peptide receptor (585 aa).

An N-terminal signal peptide occupies residues 1 to 26 (MGAPRISHSLALLLCCSVLSSVYALV). Residues 27–185 (DADDVITKEE…REREVFDRLG (159 aa)) lie on the Extracellular side of the membrane. 3 cysteine pairs are disulfide-bonded: Cys-48/Cys-114, Cys-105/Cys-145, and Cys-128/Cys-167. A disordered region spans residues 69 to 90 (MSRSAKTKKEKPAEKLYSQAEE). N-linked (GlcNAc...) asparagine glycosylation is found at Asn-148, Asn-158, Asn-163, and Asn-173. The chain crosses the membrane as a helical span at residues 186-209 (MIYTVGYSISLGSLTVAVLILGYF). Topologically, residues 210-216 (RRLHCTR) are cytoplasmic. A helical membrane pass occupies residues 217–236 (NYIHMHLFVSFMLRAVSIFI). Residues 237-276 (KDAVLYSGVSTDEIERITEEELRAFTEPPPADKAGFVGCR) are Extracellular-facing. Residues 277 to 300 (VAVTVFLYFLTTNYYWILVEGLYL) traverse the membrane as a helical segment. Topologically, residues 301–314 (HSLIFMAFFSEKKY) are cytoplasmic. A helical membrane pass occupies residues 315–336 (LWGFTLFGWGLPAVFVAVWVTV). Residues 337–355 (RATLANTECWDLSSGNKKW) lie on the Extracellular side of the membrane. The helical transmembrane segment at 356-376 (IIQVPILAAIVVNFILFINII) threads the bilayer. Over 377–403 (RVLATKLRETNAGRCDTRQQYRKLLKS) the chain is Cytoplasmic. Residues 404–422 (TLVLMPLFGVHYIVFMATP) form a helical membrane-spanning segment. Over 423–434 (YTEVSGILWQVQ) the chain is Extracellular. A helical membrane pass occupies residues 435–457 (MHYEMLFNSFQGFFVAIIYCFCN). The Cytoplasmic segment spans residues 458–585 (GEVQAEIKKS…LLEEERETVM (128 aa)). The Important for interaction with G proteins motif lies at 468-471 (WSRW). Residues 531-585 (PGYVKHGSISENSLPSSGPEPGTKDDGYLNGSGLYEPMVGEQPPPLLEEERETVM) are disordered.

It belongs to the G-protein coupled receptor 2 family. In terms of assembly, homodimer in the absence of bound ligand. Peptide hormone binding leads to dissociation of the homodimer. Post-translationally, N-glycosylated.

It is found in the cell membrane. Its function is as follows. G-protein-coupled receptor for parathyroid hormone (PTH) and for parathyroid hormone-related peptide (PTHLH). Ligand binding causes a conformation change that triggers signaling via guanine nucleotide-binding proteins (G proteins) and modulates the activity of downstream effectors, such as adenylate cyclase (cAMP). PTH1R is coupled to G(s) G alpha proteins and mediates activation of adenylate cyclase activity. PTHLH dissociates from PTH1R more rapidly than PTH; as consequence, the cAMP response induced by PTHLH decays faster than the response induced by PTH. The polypeptide is Parathyroid hormone/parathyroid hormone-related peptide receptor (PTH1R) (Didelphis virginiana (North American opossum)).